We begin with the raw amino-acid sequence, 154 residues long: NADPH-dependent 7-cyano-7-deazaguanine reductase (154 aa).

C52 (thioimide intermediate) is an active-site residue. D59 acts as the Proton donor in catalysis. Residues 74-76 (VES) and 93-94 (HE) contribute to the substrate site.

It belongs to the GTP cyclohydrolase I family. QueF type 1 subfamily.

It localises to the cytoplasm. It carries out the reaction 7-aminomethyl-7-carbaguanine + 2 NADP(+) = 7-cyano-7-deazaguanine + 2 NADPH + 3 H(+). The protein operates within tRNA modification; tRNA-queuosine biosynthesis. In terms of biological role, catalyzes the NADPH-dependent reduction of 7-cyano-7-deazaguanine (preQ0) to 7-aminomethyl-7-deazaguanine (preQ1). This chain is NADPH-dependent 7-cyano-7-deazaguanine reductase, found in Rhizobium rhizogenes (strain K84 / ATCC BAA-868) (Agrobacterium radiobacter).